The following is a 111-amino-acid chain: Ig kappa chain V-III region PC 7769 (111 aa).

Positions D1–C23 are framework-1. The cysteines at positions 23 and 92 are disulfide-linked. A complementarity-determining-1 region spans residues K24–N38. The segment at W39–F53 is framework-2. Residues A54–S60 are complementarity-determining-2. The segment at G61–C92 is framework-3. The segment at Q93 to T101 is complementarity-determining-3. Residues F102–K111 are framework-4.

The sequence is that of Ig kappa chain V-III region PC 7769 from Mus musculus (Mouse).